The primary structure comprises 523 residues: Tubulin-specific chaperone E (523 aa).

The region spanning 31 to 75 (GEVSGHMGSWLGIEWDDGLRGKHNGIVDGKRYFQTQTPTGGSFIR) is the CAP-Gly domain. 7 LRR repeats span residues 155-180 (LTHL…IAQQ), 181-204 (LPSL…QITE), 209-232 (FRQL…MHTA), 235-258 (WPNI…DRTK), 260-284 (FKQL…KLGN), 285-310 (LTTL…DSQE), and 315-337 (FVSL…AFNE).

The protein belongs to the TBCE family.

The protein localises to the cytoplasm. In terms of biological role, tubulin-folding protein which is required for the development of the neuronal microtubule network. Essential for the development and function of neuromuscular synapses. Likely to promote microtubule formation by acting in the negative regulation of the microtubule-severing protein spas. The sequence is that of Tubulin-specific chaperone E from Drosophila melanogaster (Fruit fly).